We begin with the raw amino-acid sequence, 164 residues long: Putative histone H2B type 2-D (164 aa).

Over residues 1–12 the composition is skewed to low complexity; it reads MPEPAKFAPAPK. The interval 1-33 is disordered; it reads MPEPAKFAPAPKKGSKKAVTKAQKKDGKKRKRS. Residue proline 2 is modified to N-acetylproline. N6-(2-hydroxyisobutyryl)lysine; alternate is present on lysine 6. Residues lysine 6 and lysine 12 each carry the N6-(beta-hydroxybutyryl)lysine; alternate modification. Lysine 6, lysine 12, and lysine 13 each carry N6-acetyllysine; alternate. Lysine 6 carries the post-translational modification N6-butyryllysine; alternate. An N6-crotonyllysine; alternate mark is found at lysine 6, lysine 12, and lysine 13. N6-lactoyllysine; alternate is present on residues lysine 6 and lysine 12. Lysine 6 is covalently cross-linked (Glycyl lysine isopeptide (Lys-Gly) (interchain with G-Cter in SUMO2); alternate). Lysine 13 bears the N6-(2-hydroxyisobutyryl)lysine; alternate mark. Phosphoserine; by STK4/MST1 is present on serine 15. 4 positions are modified to N6-acetyllysine; alternate: lysine 16, lysine 17, lysine 21, and lysine 24. N6-crotonyllysine; alternate occurs at positions 16, 17, 21, and 24. An N6-lactoyllysine; alternate mark is found at lysine 16, lysine 17, lysine 21, and lysine 24. Residues lysine 17 and lysine 21 each carry the N6-(beta-hydroxybutyryl)lysine; alternate modification. At lysine 17 the chain carries N6-glutaryllysine; alternate. Residues lysine 21 and lysine 24 each carry the N6-(2-hydroxyisobutyryl)lysine; alternate modification. Lysine 21 is subject to N6-butyryllysine; alternate. Lysine 21 participates in a covalent cross-link: Glycyl lysine isopeptide (Lys-Gly) (interchain with G-Cter in SUMO2); alternate. Residue lysine 25 is modified to N6-(2-hydroxyisobutyryl)lysine. Lysine 35 is modified (N6-(2-hydroxyisobutyryl)lysine; alternate). The residue at position 35 (lysine 35) is an N6-(beta-hydroxybutyryl)lysine; alternate. At lysine 35 the chain carries N6-crotonyllysine; alternate. Position 35 is an N6-glutaryllysine; alternate (lysine 35). Lysine 35 carries the N6-succinyllysine; alternate modification. Lysine 35 is covalently cross-linked (Glycyl lysine isopeptide (Lys-Gly) (interchain with G-Cter in ubiquitin); alternate). The residue at position 37 (serine 37) is a Phosphoserine; by AMPK. An N6-(2-hydroxyisobutyryl)lysine; alternate mark is found at lysine 44, lysine 47, and lysine 58. The residue at position 44 (lysine 44) is an N6-lactoyllysine; alternate. 2 positions are modified to N6-glutaryllysine; alternate: lysine 44 and lysine 47. Position 47 is an N6-methyllysine; alternate (lysine 47). Lysine 58 carries the N6,N6-dimethyllysine; alternate modification. At arginine 80 the chain carries Dimethylated arginine. Lysine 86 carries the N6-(2-hydroxyisobutyryl)lysine; alternate modification. Lysine 86 is modified (N6-(beta-hydroxybutyryl)lysine; alternate). Lysine 86 is subject to N6-acetyllysine; alternate. Residue lysine 86 is modified to N6-lactoyllysine; alternate. An N6,N6,N6-trimethyllysine; alternate modification is found at lysine 86. Arginine 87 and arginine 93 each carry omega-N-methylarginine. The tract at residues 111–140 is disordered; sequence PCPRAPRRSPSTPAPSESLPGPGARSLPPS.

The protein belongs to the histone H2B family. In terms of assembly, the nucleosome is a histone octamer containing two molecules each of H2A, H2B, H3 and H4 assembled in one H3-H4 heterotetramer and two H2A-H2B heterodimers. The octamer wraps approximately 147 bp of DNA. In terms of processing, phosphorylation at Ser-37 (H2BS36ph) by AMPK in response to stress promotes transcription. Phosphorylated on Ser-15 (H2BS14ph) by STK4/MST1 during apoptosis; which facilitates apoptotic chromatin condensation. Also phosphorylated on Ser-15 in response to DNA double strand breaks (DSBs), and in correlation with somatic hypermutation and immunoglobulin class-switch recombination. Post-translationally, crotonylation (Kcr) is specifically present in male germ cells and marks testis-specific genes in post-meiotic cells, including X-linked genes that escape sex chromosome inactivation in haploid cells. Crotonylation marks active promoters and enhancers and confers resistance to transcriptional repressors. It is also associated with post-meiotically activated genes on autosomes. Lactylated in macrophages by EP300/P300 by using lactoyl-CoA directly derived from endogenous or exogenous lactate, leading to stimulates gene transcription.

Its subcellular location is the nucleus. The protein localises to the chromosome. Its function is as follows. Core component of nucleosome. Nucleosomes wrap and compact DNA into chromatin, limiting DNA accessibility to the cellular machineries which require DNA as a template. Histones thereby play a central role in transcription regulation, DNA repair, DNA replication and chromosomal stability. DNA accessibility is regulated via a complex set of post-translational modifications of histones, also called histone code, and nucleosome remodeling. The chain is Putative histone H2B type 2-D from Homo sapiens (Human).